A 51-amino-acid chain; its full sequence is Toxin CSTX-18 (51 aa).

4 cysteine pairs are disulfide-bonded: Cys-9–Cys-22, Cys-14–Cys-27, Cys-21–Cys-36, and Cys-29–Cys-34.

Contains 4 disulfide bonds. Expressed by the venom gland.

The protein localises to the secreted. The sequence is that of Toxin CSTX-18 from Cupiennius salei (American wandering spider).